Here is a 79-residue protein sequence, read N- to C-terminus: Cytoinsectotoxin-3 (79 aa).

It belongs to the cationic peptide 06 (cytoinsectotoxin) family. As to expression, expressed by the venom gland.

Its subcellular location is the secreted. Its function is as follows. Insecticidal and antimicrobial peptide. Has insecticidal activity against larvae of flesh fly S.carnaria. Has antibacterial activity against Gram-positive bacterium B.subtilis B-501 (MIC=0.63 uM) and Gram-negative bacterium E.coli DH5alpha (MIC=2.5 uM). The chain is Cytoinsectotoxin-3 from Lachesana tarabaevi (Spider).